Here is a 431-residue protein sequence, read N- to C-terminus: Divergent protein kinase domain 1B (431 aa).

Topologically, residues 1–30 are cytoplasmic; sequence MRRLRRLVHLVLLCPFSKGLQGRLPGLRVK. The short motif at 5–6 is the May mediate ER retention element; that stretch reads RR. The chain crosses the membrane as a helical span at residues 31–51; that stretch reads YVLLVWLGIFVGSWMVYVHYS. Residues 52-431 lie on the Lumenal side of the membrane; that stretch reads SYSELCRGHV…WREISNTNYS (380 aa). Intrachain disulfides connect Cys57-Cys94 and Cys62-Cys117.

It belongs to the DIPK family. Among the many cysteines in the lumenal domain, most are probably involved in disulfide bonds. Expressed in kidney, testis, lung, heart, stomach, intestine, pancreas, liver and salivary gland. Strongly expressed in acute pancreatitis, brain, and in peripheral endothelial cells.

It localises to the endoplasmic reticulum membrane. The chain is Divergent protein kinase domain 1B (Dipk1b) from Mus musculus (Mouse).